A 470-amino-acid chain; its full sequence is Argininosuccinate lyase (470 aa).

The protein belongs to the lyase 1 family. Argininosuccinate lyase subfamily.

The protein resides in the cytoplasm. The catalysed reaction is 2-(N(omega)-L-arginino)succinate = fumarate + L-arginine. It participates in amino-acid biosynthesis; L-arginine biosynthesis; L-arginine from L-ornithine and carbamoyl phosphate: step 3/3. This Mycobacterium tuberculosis (strain CDC 1551 / Oshkosh) protein is Argininosuccinate lyase.